Consider the following 469-residue polypeptide: MASSAAAIVSGSPFRSSPLIHNHHASRYAPGSISVVSLPRQVSRRGLSVKSGLIEPDGGKLMNLVVEESRRRVMKHEAETVPARIKLNRVDLEWVHVLSEGWASPLKGFMRQSEFLQTLHFNSFRLEDGSVVNMSVPIVLAIDDDQKFRIGDSNQVTLVDSVGNPIAILNDIEIYKHPKEERIARTWGTTARGLPYAEEAITKAGNWLIGGDLQVLEPIKYNDGLDRFRLSPSQLREEFIRRGADAVFAFQLRNPVHNGHALLMTDTRRRLLEMGYKNPVLLLNPLGGFTKADDVPLSWRMRQHEKVLEDGVLDPETTVVSIFPSPMLYAGPTEVQWHAKARINAGANFYIVGRDPAGMGHPTEKRDLYDADHGKKVLSMAPGLERLNILPFKVAAYDKTQGKMAFFDPSRSQDFLFISGTKMRGLAKKKENPPDGFMCPSGWKVLVDYYDSLSAETGNGRVSEAVASA.

The N-terminal 51 residues, 1 to 51, are a transit peptide targeting the chloroplast; that stretch reads MASSAAAIVSGSPFRSSPLIHNHHASRYAPGSISVVSLPRQVSRRGLSVKS.

Belongs to the sulfate adenylyltransferase family. Homotetramer. In terms of tissue distribution, expressed in roots and leaves.

Its subcellular location is the plastid. The protein resides in the chloroplast stroma. It carries out the reaction sulfate + ATP + H(+) = adenosine 5'-phosphosulfate + diphosphate. Its pathway is sulfur metabolism; hydrogen sulfide biosynthesis; sulfite from sulfate: step 1/3. Functionally, sulfate adenylyltransferase. Catalyzes the first step of the sulfate assimilation pathway. This is ATP sulfurylase 4, chloroplastic (APS4) from Arabidopsis thaliana (Mouse-ear cress).